Reading from the N-terminus, the 233-residue chain is Phosphonates import ATP-binding protein PhnC 1 (233 aa).

Positions 2–227 (LSVSGLTKRY…PAAALDREDI (226 aa)) constitute an ABC transporter domain. Residue 34–41 (GRSGAGKT) coordinates ATP.

The protein belongs to the ABC transporter superfamily. Phosphonates importer (TC 3.A.1.9.1) family. In terms of assembly, the complex is composed of two ATP-binding proteins (PhnC), two transmembrane proteins (PhnE) and a solute-binding protein (PhnD).

It is found in the cell membrane. It catalyses the reaction phosphonate(out) + ATP + H2O = phosphonate(in) + ADP + phosphate + H(+). Its function is as follows. Part of the ABC transporter complex PhnCDE involved in phosphonates import. Responsible for energy coupling to the transport system. This chain is Phosphonates import ATP-binding protein PhnC 1, found in Natronomonas pharaonis (strain ATCC 35678 / DSM 2160 / CIP 103997 / JCM 8858 / NBRC 14720 / NCIMB 2260 / Gabara) (Halobacterium pharaonis).